The following is an 836-amino-acid chain: MGMQSGWPFFCLLISLTIGSDPHWVTVYYGVPVWRDAETVLFCASDAKAHSTEAHNIWATQACVPTDPNPQEVLLTNVTEYFNMWENKMAEQMQEDIISLWEQSLKPCVKLTPLCVTMLCNNSNGNSAGNSTTNRTEDLEDRQMKNCSFNITTEIRDRKKQVYSLFYVEDVVPIKDGTDNNTYRLINCNTTAVTQACPKTTFEPIPIHYCAPPGFAIMKCNEGNFSGNGSCTNVSTVQCTHGIKPVISTQLILNGSLDTDDIVIRHHGGNLLVQWNETVSINCTRPGNNTGGQVQIGPAMTFYNIEKIVGDVRQAYCNVSEEWGSMWNKTKKKIKRLLGNNTTFKAQDKNGGDLEVTHLMFNCXGEFFYCNTSRLFNESENKTNKTIILPCRIKQIVBLWTRVXKGIYAPPIRGNLSCXSSITGLILEHSGENGNKTVYPSGGNMVNLWRQELYKYKVVSIEPIGVAPGKAKRRTVSREKRAAFGLGALFLGFLGAAGSTMGAASITLTVQARTLLSGIVQQQNNLLRAIEAQQHLLQLSIWGIKQLRAKVLAIERYLRDQQILSLWGCSGKTICYTTVPWNDTWSSNTSYDTIWXNLTWQQWDRKVRNYSGVIFDLIEQAQEQQNTNEKALLELDQWASLWNWFDITKWLWYIKIAIMVVAGIIGIRIISAIITIIARVRQGYSPLSLQTLIPTAARGPDRPEETEEGVGGQDRGRSVRLVSGFLALIWEDLRNLLIFLYHRLADSLLIIRRTLEILGQSLSRGLQLLNELRIRLWGIIAYWGKELKDSAISLLNTTAIVVAEGTDRFIELAQRIGRGILHIPRRIRQGLERALL.

Residues 1–21 (MGMQSGWPFFCLLISLTIGSD) form the signal peptide. Over 22-656 (PHWVTVYYGV…ITKWLWYIKI (635 aa)) the chain is Extracellular. A disulfide bond links Cys43 and Cys63. N-linked (GlcNAc...) asparagine; by host glycosylation is found at Asn77, Asn121, Asn130, Asn134, Asn146, Asn150, Asn180, Asn189, Asn224, Asn228, Asn233, Asn254, Asn276, Asn282, Asn288, Asn318, Asn328, Asn340, and Asn341. Disulfide bonds link Cys108–Cys197, Cys115–Cys188, Cys120–Cys147, Cys210–Cys239, and Cys220–Cys231. Positions 120–146 (CNNSNGNSAGNSTTNRTEDLEDRQMKN) are V1. A V2 region spans residues 147–188 (CSFNITTEIRDRKKQVYSLFYVEDVVPIKDGTDNNTYRLINC). Residues 283–316 (CTRPGNNTGGQVQIGPAMTFYNIEKIVGDVRQAY) form a V3 region. A disulfide bridge links Cys283 with Cys317. The segment at 349-359 (KNGGDLEVTHL) is CD4-binding loop. Disulfide bonds link Cys363/Cys418 and Cys370/Cys391. Residues 370-391 (CNTSRLFNESENKTNKTIILPC) form a V4 region. Residues Asn371, Asn377, Asn381, Asn384, Asn415, and Asn435 are each glycosylated (N-linked (GlcNAc...) asparagine; by host). The interval 434–441 (GNKTVYPS) is V5. Residues 482–503 (AAFGLGALFLGFLGAAGSTMGA) form a fusion peptide region. An immunosuppression region spans residues 545–563 (KQLRAKVLAIERYLRDQQI). A disulfide bridge connects residues Cys569 and Cys575. Asn582, Asn588, Asn597, and Asn609 each carry an N-linked (GlcNAc...) asparagine; by host glycan. Residues 605-639 (RKVRNYSGVIFDLIEQAQEQQNTNEKALLELDQWA) are a coiled coil. Residues 634–655 (ELDQWASLWNWFDITKWLWYIK) are MPER; binding to GalCer. Residues 657–677 (AIMVVAGIIGIRIISAIITII) traverse the membrane as a helical segment. At 678-836 (ARVRQGYSPL…IRQGLERALL (159 aa)) the chain is on the cytoplasmic side. The YXXL motif; contains endocytosis signal signature appears at 684-687 (YSPL). The interval 696 to 715 (AARGPDRPEETEEGVGGQDR) is disordered. The Di-leucine internalization motif signature appears at 835 to 836 (LL).

The protein belongs to the HIV-1 env protein family. As to quaternary structure, the mature envelope protein (Env) consists of a homotrimer of non-covalently associated gp120-gp41 heterodimers. The resulting complex protrudes from the virus surface as a spike. There seems to be as few as 10 spikes on the average virion. Interacts with host CD4, CCR5 and CXCR4. Gp120 also interacts with the C-type lectins CD209/DC-SIGN and CLEC4M/DC-SIGNR (collectively referred to as DC-SIGN(R)). Gp120 and gp41 interact with GalCer. Gp120 interacts with host ITGA4/ITGB7 complex; on CD4+ T-cells, this interaction results in rapid activation of integrin ITGAL/LFA-1, which facilitates efficient cell-to-cell spreading of HIV-1. Gp120 interacts with cell-associated heparan sulfate; this interaction increases virus infectivity on permissive cells and may be involved in infection of CD4- cells. In terms of assembly, the mature envelope protein (Env) consists of a homotrimer of non-covalently associated gp120-gp41 heterodimers. The resulting complex protrudes from the virus surface as a spike. There seems to be as few as 10 spikes on the average virion. Post-translationally, highly glycosylated by host. The high number of glycan on the protein is reffered to as 'glycan shield' because it contributes to hide protein sequence from adaptive immune system. In terms of processing, palmitoylation of the transmembrane protein and of Env polyprotein (prior to its proteolytic cleavage) is essential for their association with host cell membrane lipid rafts. Palmitoylation is therefore required for envelope trafficking to classical lipid rafts, but not for viral replication. Specific enzymatic cleavages in vivo yield mature proteins. Envelope glycoproteins are synthesized as an inactive precursor that is heavily N-glycosylated and processed likely by host cell furin in the Golgi to yield the mature SU and TM proteins. The cleavage site between SU and TM requires the minimal sequence [KR]-X-[KR]-R. About 2 of the 9 disulfide bonds of gp41 are reduced by P4HB/PDI, following binding to CD4 receptor.

The protein resides in the virion membrane. Its subcellular location is the host cell membrane. The protein localises to the host endosome membrane. Its function is as follows. Oligomerizes in the host endoplasmic reticulum into predominantly trimers. In a second time, gp160 transits in the host Golgi, where glycosylation is completed. The precursor is then proteolytically cleaved in the trans-Golgi and thereby activated by cellular furin or furin-like proteases to produce gp120 and gp41. Functionally, attaches the virus to the host lymphoid cell by binding to the primary receptor CD4. This interaction induces a structural rearrangement creating a high affinity binding site for a chemokine coreceptor like CXCR4 and/or CCR5. Acts as a ligand for CD209/DC-SIGN and CLEC4M/DC-SIGNR, which are respectively found on dendritic cells (DCs), and on endothelial cells of liver sinusoids and lymph node sinuses. These interactions allow capture of viral particles at mucosal surfaces by these cells and subsequent transmission to permissive cells. HIV subverts the migration properties of dendritic cells to gain access to CD4+ T-cells in lymph nodes. Virus transmission to permissive T-cells occurs either in trans (without DCs infection, through viral capture and transmission), or in cis (following DCs productive infection, through the usual CD4-gp120 interaction), thereby inducing a robust infection. In trans infection, bound virions remain infectious over days and it is proposed that they are not degraded, but protected in non-lysosomal acidic organelles within the DCs close to the cell membrane thus contributing to the viral infectious potential during DCs' migration from the periphery to the lymphoid tissues. On arrival at lymphoid tissues, intact virions recycle back to DCs' cell surface allowing virus transmission to CD4+ T-cells. In terms of biological role, acts as a class I viral fusion protein. Under the current model, the protein has at least 3 conformational states: pre-fusion native state, pre-hairpin intermediate state, and post-fusion hairpin state. During fusion of viral and target intracellular membranes, the coiled coil regions (heptad repeats) assume a trimer-of-hairpins structure, positioning the fusion peptide in close proximity to the C-terminal region of the ectodomain. The formation of this structure appears to drive apposition and subsequent fusion of viral and target cell membranes. Complete fusion occurs in host cell endosomes and is dynamin-dependent, however some lipid transfer might occur at the plasma membrane. The virus undergoes clathrin-dependent internalization long before endosomal fusion, thus minimizing the surface exposure of conserved viral epitopes during fusion and reducing the efficacy of inhibitors targeting these epitopes. Membranes fusion leads to delivery of the nucleocapsid into the cytoplasm. The polypeptide is Envelope glycoprotein gp160 (Human immunodeficiency virus type 1 group N (isolate YBF106) (HIV-1)).